Here is a 297-residue protein sequence, read N- to C-terminus: Translocase of chloroplast 33, chloroplastic (297 aa).

The AIG1-type G domain occupies Met-34 to Ser-258. The helical transmembrane segment at Met-37–Val-53 threads the bilayer. GTP is bound by residues Gly-46–Ser-51 and Ser-65–Glu-70. Residues Ser-50 and Gln-68 each contribute to the Mg(2+) site. Homodimerization regions lie at residues Ser-65–Gln-68 and Arg-125–Arg-130. GTP is bound at residue His-160. Phosphoserine is present on Ser-181. Glu-208–Asn-209 provides a ligand contact to GTP.

The protein belongs to the TRAFAC class TrmE-Era-EngA-EngB-Septin-like GTPase superfamily. AIG1/Toc34/Toc159-like paraseptin GTPase family. TOC34 subfamily. Homodimer, heterodimer with TOC34 and TOC159, and monomer. The homodimerization and the dimerization with TOC159 require the binding of GTP on Arg-130, and a hypothetical coGAP factor. The dimeric form has a higher GTPase activity than the monomeric form. Part of the TOC core complex that includes 1 protein for the specific recognition of transit peptides surrounded by a ring composed of four proteins forming translocation channels, and four to five GTP-binding proteins providing energy. This core complex can interact with components of the TIC complex to form a larger import complex. Chloroplastic protein precursor such as prSS (precursor of the RuBisCO small subunit) interacts with these complexes. The TOC complex contains a specific subset of polar lipids such as digalactosyldiacylglyceride (DGDG), phosphatidylcholine (PC) and phosphatidylglycerol (PG). Interacts at least with TOC75-3. Forms large complexes including TOC33, pPORA and OEP161 during pPORA import into plastids at the plastid envelope membrane. Interacts with SP1. The cofactor is Mg(2+). In terms of processing, phosphorylated by a kinase present in the outer envelope of chloroplast. When Ser-181 is phosphorylated, the binding to preprotein, GTP and GDP is inhibited, and thus, GTPase activity is repressed. In terms of tissue distribution, mostly expressed in seedlings and flowers, and, to a lower extent, in roots, stems, and leaves.

Its subcellular location is the plastid. It localises to the chloroplast outer membrane. Its function is as follows. GTPase involved in protein precursor import into chloroplasts. Seems to recognize chloroplast-destined precursor proteins and regulate their presentation to the translocation channel through GTP hydrolysis. Binds GTP, GDP, XTP, but not ATP. Probably specialized in the import of nuclear encoded photosynthetic preproteins from the cytoplasm to the chloroplast, especially during early development stages. In Arabidopsis thaliana (Mouse-ear cress), this protein is Translocase of chloroplast 33, chloroplastic (TOC33).